A 391-amino-acid polypeptide reads, in one-letter code: Glycerol-3-phosphate dehydrogenase [NAD(+)] (391 aa).

NAD(+)-binding positions include 46–51 (GSGNWG), Phe78, and Phe134. Lys157 contributes to the substrate binding site. Ala190 contributes to the NAD(+) binding site. Lys250 functions as the Proton acceptor in the catalytic mechanism. NAD(+) is bound by residues Arg315 and Gln344. Residue 315–316 (RN) coordinates substrate.

This sequence belongs to the NAD-dependent glycerol-3-phosphate dehydrogenase family.

The enzyme catalyses sn-glycerol 3-phosphate + NAD(+) = dihydroxyacetone phosphate + NADH + H(+). The sequence is that of Glycerol-3-phosphate dehydrogenase [NAD(+)] (GPD) from Candida tropicalis (Yeast).